The chain runs to 375 residues: Chaperone protein DnaJ (375 aa).

A J domain is found at 5 to 70; that stretch reads DFYEVLGVER…SKRAAYDQYG (66 aa). Residues 134–212 form a CR-type zinc finger; sequence GTTVSIRVPT…CHGEGRVEEY (79 aa). Residues Cys-147, Cys-150, Cys-164, Cys-167, Cys-186, Cys-189, Cys-200, and Cys-203 each contribute to the Zn(2+) site. CXXCXGXG motif repeat units lie at residues 147 to 154, 164 to 171, 186 to 193, and 200 to 207; these read CKPCDGSG, CPTCGGIG, CPRCHGQG, and CNSCHGEG.

It belongs to the DnaJ family. In terms of assembly, homodimer. Zn(2+) is required as a cofactor.

It localises to the cytoplasm. Its function is as follows. Participates actively in the response to hyperosmotic and heat shock by preventing the aggregation of stress-denatured proteins and by disaggregating proteins, also in an autonomous, DnaK-independent fashion. Unfolded proteins bind initially to DnaJ; upon interaction with the DnaJ-bound protein, DnaK hydrolyzes its bound ATP, resulting in the formation of a stable complex. GrpE releases ADP from DnaK; ATP binding to DnaK triggers the release of the substrate protein, thus completing the reaction cycle. Several rounds of ATP-dependent interactions between DnaJ, DnaK and GrpE are required for fully efficient folding. Also involved, together with DnaK and GrpE, in the DNA replication of plasmids through activation of initiation proteins. The protein is Chaperone protein DnaJ of Pseudomonas entomophila (strain L48).